We begin with the raw amino-acid sequence, 246 residues long: Apolipoprotein L domain-containing protein 1 (246 aa).

A run of 2 helical transmembrane segments spans residues 50–72 (SLAANVAGSSLSAAGALAAIVGL) and 89–109 (GLGVATAGGAVTITSDLSLIF). A coiled-coil region spans residues 193 to 220 (LKAKIQKLSESLESCTGALDELSEQLES).

This sequence belongs to the apolipoprotein L family. In terms of tissue distribution, present at low levels in brain vascular cells (at protein level).

The protein resides in the cell membrane. The protein localises to the cell junction. It localises to the cytoplasmic vesicle. It is found in the secretory vesicle. Its function is as follows. Is a modulator of endothelial barrier permeability, required for proper organization of endothelial cell-cell junctions and cytoskeleton. It also plays a role in the modulation of secretory autophagy. May affect blood-brain barrier permeability. The sequence is that of Apolipoprotein L domain-containing protein 1 (Apold1) from Rattus norvegicus (Rat).